The sequence spans 360 residues: NAD(P)H-quinone oxidoreductase subunit 1, chloroplastic (360 aa).

8 helical membrane-spanning segments follow: residues 27–47 (IWIF…VLVI), 98–118 (FSIG…VIPF), 129–149 (IGIF…LMSG), 165–185 (AAQS…ISLL), 203–223 (FWGW…ISSL), 253–273 (FGLF…FVTV), 297–317 (IFGT…FLFV), and 340–360 (FLLP…LFSL).

The protein belongs to the complex I subunit 1 family. In terms of assembly, NDH is composed of at least 16 different subunits, 5 of which are encoded in the nucleus.

The protein resides in the plastid. The protein localises to the chloroplast thylakoid membrane. The catalysed reaction is a plastoquinone + NADH + (n+1) H(+)(in) = a plastoquinol + NAD(+) + n H(+)(out). It carries out the reaction a plastoquinone + NADPH + (n+1) H(+)(in) = a plastoquinol + NADP(+) + n H(+)(out). Its function is as follows. NDH shuttles electrons from NAD(P)H:plastoquinone, via FMN and iron-sulfur (Fe-S) centers, to quinones in the photosynthetic chain and possibly in a chloroplast respiratory chain. The immediate electron acceptor for the enzyme in this species is believed to be plastoquinone. Couples the redox reaction to proton translocation, and thus conserves the redox energy in a proton gradient. In Arabidopsis thaliana (Mouse-ear cress), this protein is NAD(P)H-quinone oxidoreductase subunit 1, chloroplastic.